The following is a 263-amino-acid chain: Probable HTH-type transcriptional regulator ArcR (263 aa).

The HTH iclR-type domain occupies 14 to 74 (ITSVLNAVEI…DGDGTYQLGD (61 aa)). A DNA-binding region (H-T-H motif) is located at residues 35–54 (LQELTTELDLTKATIHTYMA). In terms of domain architecture, IclR-ED spans 89-262 (LYRLGREEID…ANIIEVRLET (174 aa)).

Probably regulates transcription of the arcABC operon. The protein is Probable HTH-type transcriptional regulator ArcR (arcR) of Halobacterium salinarum (strain ATCC 29341 / DSM 671 / R1).